Here is a 263-residue protein sequence, read N- to C-terminus: Small ribosomal subunit protein eS1 (263 aa).

Positions 235–263 are disordered; that stretch reads HGEGGGGKGEAGDKSERPEGYEPPVQESV. The span at 244-254 shows a compositional bias: basic and acidic residues; that stretch reads EAGDKSERPEG.

This sequence belongs to the eukaryotic ribosomal protein eS1 family. As to quaternary structure, component of the small ribosomal subunit. Mature ribosomes consist of a small (40S) and a large (60S) subunit. The 40S subunit contains about 33 different proteins and 1 molecule of RNA (18S). The 60S subunit contains about 49 different proteins and 3 molecules of RNA (28S, 5.8S and 5S).

It is found in the cytoplasm. This Bombyx mori (Silk moth) protein is Small ribosomal subunit protein eS1.